A 415-amino-acid chain; its full sequence is Levansucrase (415 aa).

Sucrose is bound by residues Trp-45, Asp-46, Ala-132, Arg-202, and Asp-203. Asp-46 serves as the catalytic Nucleophile. Glu-287 functions as the Proton donor/acceptor in the catalytic mechanism.

The protein belongs to the glycosyl hydrolase 68 family.

The protein resides in the secreted. It catalyses the reaction [6)-beta-D-fructofuranosyl-(2-&gt;](n) alpha-D-glucopyranoside + sucrose = [6)-beta-D-fructofuranosyl-(2-&gt;](n+1) alpha-D-glucopyranoside + D-glucose. Its function is as follows. Catalyzes the synthesis of levan, a fructose polymer, by transferring the fructosyl moiety from sucrose to a growing acceptor molecule. The polypeptide is Levansucrase (Erwinia amylovora (Fire blight bacteria)).